The following is a 117-amino-acid chain: Modulator protein MzrA (117 aa).

Over 1–9 the chain is Cytoplasmic; it reads MNSPGLRKP. A helical membrane pass occupies residues 10–29; that stretch reads TIWRPLLLLFPLLALLLSMS. Residues 30 to 117 are Periplasmic-facing; it reads SPRLPDEVML…THGTIRVARS (88 aa).

The protein belongs to the MzrA family. As to quaternary structure, interacts with EnvZ.

It localises to the cell inner membrane. Its function is as follows. Modulates the activity of the EnvZ/OmpR two-component regulatory system, probably by directly modulating EnvZ enzymatic activity and increasing stability of phosphorylated OmpR. The sequence is that of Modulator protein MzrA from Dickeya zeae (strain Ech586) (Dickeya dadantii (strain Ech586)).